The chain runs to 273 residues: Imidazole glycerol phosphate synthase subunit HisF (273 aa).

Catalysis depends on residues D11 and D134.

This sequence belongs to the HisA/HisF family. Heterodimer of HisH and HisF.

It is found in the cytoplasm. The enzyme catalyses 5-[(5-phospho-1-deoxy-D-ribulos-1-ylimino)methylamino]-1-(5-phospho-beta-D-ribosyl)imidazole-4-carboxamide + L-glutamine = D-erythro-1-(imidazol-4-yl)glycerol 3-phosphate + 5-amino-1-(5-phospho-beta-D-ribosyl)imidazole-4-carboxamide + L-glutamate + H(+). The protein operates within amino-acid biosynthesis; L-histidine biosynthesis; L-histidine from 5-phospho-alpha-D-ribose 1-diphosphate: step 5/9. Its function is as follows. IGPS catalyzes the conversion of PRFAR and glutamine to IGP, AICAR and glutamate. The HisF subunit catalyzes the cyclization activity that produces IGP and AICAR from PRFAR using the ammonia provided by the HisH subunit. This Methanococcoides burtonii (strain DSM 6242 / NBRC 107633 / OCM 468 / ACE-M) protein is Imidazole glycerol phosphate synthase subunit HisF.